The sequence spans 232 residues: MELSEHEEDAGDVGGGCSSPPTPPHRVLTSAAPETIRCRYHECLRNHAAASGGHVVDGCGEFMPASTEEPLACAACGCHRSFHRRDPSPGRAGAARLPQLHLPASINSRAPPALLLPPAAAASKQGLPFPGYGTPSGGTGTTTASSSDERLRPSPVQPRRRSRTTFTREQKEQMLAFAERVGWRIQRQEEATVEHFCAQVGVRRQALKVWMHNNKHSFKQKQQQENRQEQQQ.

Over residues 1-11 (MELSEHEEDAG) the composition is skewed to acidic residues. Residues 1-25 (MELSEHEEDAGDVGGGCSSPPTPPH) form a disordered region. The segment at 40–86 (YHECLRNHAAASGGHVVDGCGEFMPASTEEPLACAACGCHRSFHRRD) adopts a ZF-HD dimerization-type; degenerate zinc-finger fold. A disordered region spans residues 126–170 (GLPFPGYGTPSGGTGTTTASSSDERLRPSPVQPRRRSRTTFTREQ). The homeobox DNA-binding region spans 159–222 (RRRSRTTFTR…NNKHSFKQKQ (64 aa)).

As to quaternary structure, homo- and heterodimer with other ZFHD proteins.

It is found in the nucleus. Its function is as follows. Putative transcription factor. This is Zinc-finger homeodomain protein 5 (ZHD5) from Oryza sativa subsp. japonica (Rice).